A 357-amino-acid chain; its full sequence is UPF0283 membrane protein BSUIS_A1077 (357 aa).

Residues 1-36 are disordered; that stretch reads MSDKTPRKPTAFRLEQPARVSAASEQEEPRHPRAVK. The segment covering 27 to 36 has biased composition (basic and acidic residues); that stretch reads EEPRHPRAVK. The next 2 membrane-spanning stretches (helical) occupy residues 78–98 and 109–129; these read ILFG…TEDL and LGWT…AIIL.

It belongs to the UPF0283 family.

It localises to the cell inner membrane. This chain is UPF0283 membrane protein BSUIS_A1077, found in Brucella suis (strain ATCC 23445 / NCTC 10510).